The chain runs to 399 residues: G2/mitotic-specific cyclin-B2 (399 aa).

Residues 58-78 (PVKATKGPGKMTNTVVPPKPP) are disordered.

It belongs to the cyclin family. Cyclin AB subfamily. Interacts with the CDK1 protein kinase to form a serine/threonine kinase holoenzyme complex also known as maturation promoting factor (MPF). The cyclin subunit imparts substrate specificity to the complex.

Its function is as follows. Essential for the control of the cell cycle at the G2/M (mitosis) transition. The protein is G2/mitotic-specific cyclin-B2 (CCNB2) of Gallus gallus (Chicken).